Reading from the N-terminus, the 237-residue chain is Large ribosomal subunit protein uL1 (237 aa).

This sequence belongs to the universal ribosomal protein uL1 family. As to quaternary structure, part of the 50S ribosomal subunit.

Its function is as follows. Binds directly to 23S rRNA. The L1 stalk is quite mobile in the ribosome, and is involved in E site tRNA release. Protein L1 is also a translational repressor protein, it controls the translation of the L11 operon by binding to its mRNA. The sequence is that of Large ribosomal subunit protein uL1 from Synechococcus elongatus (strain ATCC 33912 / PCC 7942 / FACHB-805) (Anacystis nidulans R2).